The chain runs to 143 residues: Large ribosomal subunit protein uL13 (143 aa).

This sequence belongs to the universal ribosomal protein uL13 family. As to quaternary structure, part of the 50S ribosomal subunit.

Functionally, this protein is one of the early assembly proteins of the 50S ribosomal subunit, although it is not seen to bind rRNA by itself. It is important during the early stages of 50S assembly. In Prochlorococcus marinus subsp. pastoris (strain CCMP1986 / NIES-2087 / MED4), this protein is Large ribosomal subunit protein uL13.